The chain runs to 402 residues: Phosphoglycerate kinase (402 aa).

Residues 29–31 (DFN), Arg-45, 69–72 (HLGR), Arg-125, and Arg-158 each bind substrate. ATP is bound by residues Lys-209, Glu-331, and 357-360 (GGDT).

This sequence belongs to the phosphoglycerate kinase family.

The protein resides in the cytoplasm. The enzyme catalyses (2R)-3-phosphoglycerate + ATP = (2R)-3-phospho-glyceroyl phosphate + ADP. Its pathway is carbohydrate degradation; glycolysis; pyruvate from D-glyceraldehyde 3-phosphate: step 2/5. This is Phosphoglycerate kinase (pgk) from Helicobacter pylori (strain ATCC 700392 / 26695) (Campylobacter pylori).